A 311-amino-acid polypeptide reads, in one-letter code: N-acetylmuramic acid 6-phosphate etherase (311 aa).

Residues 66–230 form the SIS domain; sequence VVEAFEADGR…TTAAMVRLGK (165 aa). Glu-94 acts as the Proton donor in catalysis. Residue Glu-125 is part of the active site.

Belongs to the GCKR-like family. MurNAc-6-P etherase subfamily. In terms of assembly, homodimer.

It catalyses the reaction N-acetyl-D-muramate 6-phosphate + H2O = N-acetyl-D-glucosamine 6-phosphate + (R)-lactate. The protein operates within amino-sugar metabolism; N-acetylmuramate degradation. Functionally, specifically catalyzes the cleavage of the D-lactyl ether substituent of MurNAc 6-phosphate, producing GlcNAc 6-phosphate and D-lactate. The sequence is that of N-acetylmuramic acid 6-phosphate etherase from Salinibacter ruber (strain DSM 13855 / M31).